A 445-amino-acid polypeptide reads, in one-letter code: Putative H/ACA ribonucleoprotein complex subunit 4 (445 aa).

Positions 1–32 are disordered; that stretch reads MGKKDKRSKLEGDDLAEAQQKGSFQLPSSNET. Residues 20 to 32 show a composition bias toward polar residues; the sequence is QKGSFQLPSSNET. D113 functions as the Nucleophile in the catalytic mechanism. The PUA domain occupies 284–359; it reads HKRVVVKDSC…VVAKSKRVIM (76 aa). The interval 386-445 is disordered; the sequence is LDKFGKPNDTTPKSWAKEYVQTSTKKEVKKEETPDEEEEEAPKKKSKKSKKQESSDSDSD.

Belongs to the pseudouridine synthase TruB family. As to quaternary structure, component of the small nucleolar ribonucleoprotein particle containing H/ACA-type snoRNAs (H/ACA snoRNPs).

It is found in the nucleus. Its subcellular location is the nucleolus. It catalyses the reaction a uridine in RNA = a pseudouridine in RNA. Plays a central role in ribosomal RNA processing. Probable catalytic subunit of H/ACA small nucleolar ribonucleoprotein (H/ACA snoRNP) complex, which catalyzes pseudouridylation of rRNA. This involves the isomerization of uridine such that the ribose is subsequently attached to C5, instead of the normal N1. Pseudouridine ('psi') residues may serve to stabilize the conformation of rRNAs. The sequence is that of Putative H/ACA ribonucleoprotein complex subunit 4 from Caenorhabditis elegans.